Reading from the N-terminus, the 369-residue chain is MGEITNVMEYQAIAKQKLPKMAYDYYASGAEDEWTLQENREAFSRILFRPRILIDVSKIDMTTTVLGFKISMPIMVAPTAMQKMAHPDGEYATARAAAAAGTIMTLSSWATSSVEEVASTGPGIRFFQLYVYKDRKVVEQLVRRAERAGFKAIALTVDTPRLGRREADIKNRFVLPPHLTLKNFEGLDLGKMDQAADSGLASYVAGQVDRTLSWKDVKWLQTITTLPILVKGVLTAEDTRLAVANGAAGIIVSNHGARQLDYVPATISALEEVVKAARGQLPVFVDGGVRRGTDVFKALALGAAGVFVGRPVVFSLAAAGEAGVSNVLRMLRDEFELTMALSGCTSLAEITRKHIITESDKLSAIPSRL.

The region spanning 1–360 is the FMN hydroxy acid dehydrogenase domain; sequence MGEITNVMEY…TRKHIITESD (360 aa). A glyoxylate-binding site is contributed by Tyr25. Residues 78 to 80, Ser107, 128 to 130, and Thr156 contribute to the FMN site; these read PTA and QLY. Glyoxylate is bound at residue Tyr130. A glyoxylate-binding site is contributed by Arg165. Positions 231 and 253 each coordinate FMN. The glyoxylate site is built by His255 and Arg258. His255 (proton acceptor) is an active-site residue. Residues 286–290 and 309–310 each bind FMN; these read DGGVR and GR.

Belongs to the FMN-dependent alpha-hydroxy acid dehydrogenase family. In terms of assembly, homotetramer. Requires FMN as cofactor.

The protein resides in the peroxisome. The enzyme catalyses glycolate + O2 = glyoxylate + H2O2. It participates in photosynthesis; photorespiration; glycine from 2-phosphoglycolate: step 2/3. Catalyzes the oxidation of glycolate to glyoxylate, with a reduction of O2 to H2O2. Is an essential enzyme in photorespiration in plants. Photorespiration plays a vital role in C4 photosynthesis in Z.mays and is essential for maize seedling development and maintaining low (non-toxic) levels of glycolate. This Zea mays (Maize) protein is Glycolate oxidase 1.